Reading from the N-terminus, the 314-residue chain is tRNA dimethylallyltransferase (314 aa).

An ATP-binding site is contributed by 14–21; it reads GPTASGKT. Position 16–21 (16–21) interacts with substrate; it reads TASGKT. Interaction with substrate tRNA stretches follow at residues 39 to 42, 163 to 167, and 245 to 250; these read DSAQ, QRLQR, and RCVGYR.

Belongs to the IPP transferase family. Monomer. The cofactor is Mg(2+).

The enzyme catalyses adenosine(37) in tRNA + dimethylallyl diphosphate = N(6)-dimethylallyladenosine(37) in tRNA + diphosphate. In terms of biological role, catalyzes the transfer of a dimethylallyl group onto the adenine at position 37 in tRNAs that read codons beginning with uridine, leading to the formation of N6-(dimethylallyl)adenosine (i(6)A). In Dechloromonas aromatica (strain RCB), this protein is tRNA dimethylallyltransferase.